We begin with the raw amino-acid sequence, 485 residues long: NADH-quinone oxidoreductase subunit N (485 aa).

14 helical membrane passes run 8-28, 35-55, 71-91, 105-125, 127-147, 159-179, 203-223, 235-255, 271-291, 297-317, 326-346, 373-393, 408-430, and 455-475; these read LIAL…MLSI, FLNA…LWFV, GFAM…CTFA, FYLL…ANHL, SLFL…GYAF, YTIL…LVYA, LLAG…LVPF, PAPV…GVVM, VVLA…ALSQ, LLGY…IALQ, VGVY…VVSL, AAVM…LGFI, WWLV…RVAV, and IVVL…QPLI.

Belongs to the complex I subunit 2 family. As to quaternary structure, NDH-1 is composed of 13 different subunits. Subunits NuoA, H, J, K, L, M, N constitute the membrane sector of the complex.

It localises to the cell inner membrane. The enzyme catalyses a quinone + NADH + 5 H(+)(in) = a quinol + NAD(+) + 4 H(+)(out). In terms of biological role, NDH-1 shuttles electrons from NADH, via FMN and iron-sulfur (Fe-S) centers, to quinones in the respiratory chain. The immediate electron acceptor for the enzyme in this species is believed to be ubiquinone. Couples the redox reaction to proton translocation (for every two electrons transferred, four hydrogen ions are translocated across the cytoplasmic membrane), and thus conserves the redox energy in a proton gradient. The polypeptide is NADH-quinone oxidoreductase subunit N (Escherichia coli O81 (strain ED1a)).